Consider the following 156-residue polypeptide: Ribonuclease pancreatic (156 aa).

The signal sequence occupies residues 1 to 28 (MALEKSLVLLPLFVLMLLVLGWVQPSLG). Residues K35 and R38 each coordinate substrate. H40 (proton acceptor) is an active-site residue. N50 and N62 each carry an N-linked (GlcNAc...) asparagine glycan. 4 cysteine pairs are disulfide-bonded: C54/C112, C68/C123, C86/C138, and C93/C100. Substrate is bound by residues 69 to 73 (KPVNT) and K94. N104 is a glycosylation site (N-linked (GlcNAc...) asparagine). R113 contributes to the substrate binding site. N-linked (GlcNAc...) asparagine glycosylation is present at N116. The Proton donor role is filled by H147.

This sequence belongs to the pancreatic ribonuclease family. As to quaternary structure, monomer. Interacts with and forms tight 1:1 complexes with RNH1. Dimerization of two such complexes may occur. Interaction with RNH1 inhibits this protein.

Its subcellular location is the secreted. The catalysed reaction is an [RNA] containing cytidine + H2O = an [RNA]-3'-cytidine-3'-phosphate + a 5'-hydroxy-ribonucleotide-3'-[RNA].. It carries out the reaction an [RNA] containing uridine + H2O = an [RNA]-3'-uridine-3'-phosphate + a 5'-hydroxy-ribonucleotide-3'-[RNA].. In terms of biological role, endonuclease that catalyzes the cleavage of RNA on the 3' side of pyrimidine nucleotides. Acts on single-stranded and double-stranded RNA. The protein is Ribonuclease pancreatic (RNASE1) of Nomascus leucogenys (Northern white-cheeked gibbon).